Here is a 292-residue protein sequence, read N- to C-terminus: DCN1-like protein 4 (292 aa).

The tract at residues 43–83 is disordered; the sequence is HQTGSLRSCSSSDCFNKVMPPRKKRRPASGDDLSAKKSRHD. Polar residues predominate over residues 45–56; the sequence is TGSLRSCSSSDC. K95 is covalently cross-linked (Glycyl lysine isopeptide (Lys-Gly) (interchain with G-Cter in SUMO2)). The DCUN1 domain maps to 101 to 287; that stretch reads FSSKRCLEWF…LLDEFVEWYK (187 aa).

As to quaternary structure, interacts (via the DCUN1 domain) with the unneddylated cullins: interacts with CUL1, CUL2, CUL3, CUL4A, CUL4B and CUL5; these interactions promote the cullin neddylation and the identity of the cullin dictates the affinity of the interaction. Interacts with RBX1 and RNF7. Interacts with CAND1; this interaction is bridged by cullins such as CUL3 and strongly inhibits the neddylation of CUL3. These CAND-cullin-DCNL complexes can only be neddylated in the presence of a substrate adapter. Interacts (via DCUN1 domain) with UBE2M (N-terminally acetylated form) and probably with UBE2F (N-terminally acetylated form).

It localises to the nucleus. Functionally, contributes to the neddylation of all cullins by transferring NEDD8 from N-terminally acetylated NEDD8-conjugating E2s enzyme to different cullin C-terminal domain-RBX complexes which are necessary for the activation of cullin-RING E3 ubiquitin ligases (CRLs). This chain is DCN1-like protein 4, found in Homo sapiens (Human).